A 164-amino-acid chain; its full sequence is SsrA-binding protein (164 aa).

Belongs to the SmpB family.

The protein localises to the cytoplasm. Required for rescue of stalled ribosomes mediated by trans-translation. Binds to transfer-messenger RNA (tmRNA), required for stable association of tmRNA with ribosomes. tmRNA and SmpB together mimic tRNA shape, replacing the anticodon stem-loop with SmpB. tmRNA is encoded by the ssrA gene; the 2 termini fold to resemble tRNA(Ala) and it encodes a 'tag peptide', a short internal open reading frame. During trans-translation Ala-aminoacylated tmRNA acts like a tRNA, entering the A-site of stalled ribosomes, displacing the stalled mRNA. The ribosome then switches to translate the ORF on the tmRNA; the nascent peptide is terminated with the 'tag peptide' encoded by the tmRNA and targeted for degradation. The ribosome is freed to recommence translation, which seems to be the essential function of trans-translation. The chain is SsrA-binding protein from Gluconobacter oxydans (strain 621H) (Gluconobacter suboxydans).